The primary structure comprises 425 residues: Glutamyl-tRNA reductase (425 aa).

Residues 49 to 52, Ser109, 114 to 116, and Gln120 each bind substrate; these read TCNR and EGQ. Cys50 functions as the Nucleophile in the catalytic mechanism. Residue 189–194 coordinates NADP(+); sequence GAGETG.

The protein belongs to the glutamyl-tRNA reductase family. Homodimer.

It carries out the reaction (S)-4-amino-5-oxopentanoate + tRNA(Glu) + NADP(+) = L-glutamyl-tRNA(Glu) + NADPH + H(+). Its pathway is porphyrin-containing compound metabolism; protoporphyrin-IX biosynthesis; 5-aminolevulinate from L-glutamyl-tRNA(Glu): step 1/2. The protein operates within porphyrin-containing compound metabolism; chlorophyll biosynthesis. Catalyzes the NADPH-dependent reduction of glutamyl-tRNA(Glu) to glutamate 1-semialdehyde (GSA). This is Glutamyl-tRNA reductase from Chlorobium phaeobacteroides (strain DSM 266 / SMG 266 / 2430).